The following is a 267-amino-acid chain: Mediator of RNA polymerase II transcription subunit 18 (267 aa).

It belongs to the Mediator complex subunit 18 family. In terms of assembly, component of the Mediator complex.

It localises to the nucleus. Component of the Mediator complex, a coactivator involved in the regulated transcription of nearly all RNA polymerase II-dependent genes. Mediator functions as a bridge to convey information from gene-specific regulatory proteins to the basal RNA polymerase II transcription machinery. Mediator is recruited to promoters by direct interactions with regulatory proteins and serves as a scaffold for the assembly of a functional preinitiation complex with RNA polymerase II and the general transcription factors. In Coccidioides immitis (strain RS) (Valley fever fungus), this protein is Mediator of RNA polymerase II transcription subunit 18 (SRB5).